Reading from the N-terminus, the 70-residue chain is Brevinin-1MT2 (70 aa).

The signal sequence occupies residues 1–22 (MFTLKKSMLLLFFLGTINLSLC). The propeptide occupies 23-44 (EQERNADEEERRDDDEMDVEVE). Cys-64 and Cys-70 are disulfide-bonded.

It belongs to the frog skin active peptide (FSAP) family. Brevinin subfamily. As to expression, expressed by the skin glands.

The protein resides in the secreted. Functionally, antimicrobial peptide with activity against a variety of Gram-negative and Gram-positive bacteria and against fungi. Shows strong hemolytic activity against human erythrocytes. The polypeptide is Brevinin-1MT2 (Amolops mantzorum (Sichuan torrent frog)).